We begin with the raw amino-acid sequence, 706 residues long: MAREYPLELYRNFGIMAHIDAGKTTCSERILFYTGKSHNIGEVHDGAATMDWMEQEQERGITITSAATTTFWERTEDGETADTPKHRLNIIDTPGHVDFTIEVERSLAVLDGAVCVLDANAGVEPQTETVWRQADRYKVPRMVFVNKMDKIGADFFNCVRMIEDRTGARAVPVGIPIGAENELEGLIDLVTMKEWLWQGEDLGASWVQVDIRDSLKEMAEEWRGKMIEAAVEMDDDAMENYLMDGAEPDVATLRSLLRKGTLSLSFVPVLGGSAFKNKGVQPLLNAVIDYLPSPLDVVDYMGFKPGDEEEVRNIARRADDDMAFSGLAFKIMNDPFVGSLTFTRIYSGVLNKGDSILNSTKGKKERIGRMMMMHSNNREEIEEAFAGDIIALAGLKDTTTGDTLCDAKEPVVLETMTFPDPVIEIAVEPKTKGDQEKMSQGLARLAAEDPSFRVETDLESGQTIMKGMGELHLDILVDRLKREFKVEANIGAPQVAYRETIGHEVEHTYTHKKQSGGSGQFAEVKMIISPTEAGEGYSFESRIVGGSVPKEYIPGVEKGINSVMDSGPLAGFPVIDFKVALIDGKFHDVDSSVLAFEIAARMCMREGMRKAGAKLLEPIMKVEVITPEEYTGGIIGDLTSRRGQVSGQEPRGNAIAIDANVPLANMFGYINTLRSMSSGRAQFTMQFSHYDPVPQNISEEIQAKYA.

A tr-type G domain is found at 8–295; it reads ELYRNFGIMA…AVIDYLPSPL (288 aa). Residues 17-24, 92-96, and 146-149 contribute to the GTP site; these read AHIDAGKT, DTPGH, and NKMD.

This sequence belongs to the TRAFAC class translation factor GTPase superfamily. Classic translation factor GTPase family. EF-G/EF-2 subfamily.

Its subcellular location is the cytoplasm. In terms of biological role, catalyzes the GTP-dependent ribosomal translocation step during translation elongation. During this step, the ribosome changes from the pre-translocational (PRE) to the post-translocational (POST) state as the newly formed A-site-bound peptidyl-tRNA and P-site-bound deacylated tRNA move to the P and E sites, respectively. Catalyzes the coordinated movement of the two tRNA molecules, the mRNA and conformational changes in the ribosome. This chain is Elongation factor G, found in Ruegeria sp. (strain TM1040) (Silicibacter sp.).